The following is a 509-amino-acid chain: Cytochrome P450 monooxygenase FUP2 (509 aa).

2 helical membrane-spanning segments follow: residues 16-36 and 224-244; these read FGLALVISALALVSVIIYGCF and MVEALSFFLTLPGIASVFGIA. Cys450 is a heme binding site.

It belongs to the cytochrome P450 family. The cofactor is heme.

The protein resides in the membrane. It participates in secondary metabolite biosynthesis. Functionally, cytochrome P450 monooxygenase; part of the gene cluster that mediates the biosynthesis of the mycotoxin fusaproliferin (FUP) that belongs to the class of bicyclic sesterterpenoids. FUP2 introduces a hydroxyl group at the C-24 position resulting in the formation of preterpestacin IIa, which can be further oxidized. The oxidation of the hydroxyl group at C-24 to an aldehyde and further to a carboxylic group takes place via unspecific alcohol and aldehyde dehydrogenases and leads to the shunt products preterpestacin IIc and preterpestacin IIb, respectively. The FUP biosynthetic pathway starts with the enzyme encoded by FUP1 that combines a C-terminal prenyltransferase domain responsible for the synthesis of geranylgeranyl diphosphate with the N-terminal terpene cyclase domain, to yield preterpestacin I. Preterpestacin I is then decorated by oxygenation steps that are catalyzed by two cytochrome P450 monooxygenases. First, FUP2 introduces a hydroxyl group at the C-24 position resulting in the formation of preterpestacin IIa. The second P450 monooxygenase catalyzes the hydroxylation at C-16 and C-17 of preterpestacin IIa, producing preterpestacin III. Subsequently, the FAD-dependent oxidoreductase FUP4 catalyzes the oxidation of the hydroxy group at the C-16 position to a keto group, leading to the formation of (-)-terpestacin, which is the immediate precursor of FUP. The final step in the proposed biosynthetic pathway is the addition of an acetyl group at the C-24 position of terpestacin, which is catalyzed by the acetyltransferase FUP5. The sequence is that of Cytochrome P450 monooxygenase FUP2 from Fusarium proliferatum (strain ET1) (Orchid endophyte fungus).